The following is a 265-amino-acid chain: Flagellar brake protein YcgR (265 aa).

Residues 135-252 (QRRESYRLET…DETIQRYIFR (118 aa)) form the PilZ domain.

The protein belongs to the YcgR family. Monomer. Interacts with the flagellar basal bodies.

It is found in the bacterial flagellum basal body. Acts as a flagellar brake, regulating swimming and swarming in a bis-(3'-5') cyclic diguanylic acid (c-di-GMP)-dependent manner. Binds 1 c-di-GMP dimer per subunit. Increasing levels of c-di-GMP lead to decreased motility. This is Flagellar brake protein YcgR from Xanthomonas campestris pv. campestris (strain B100).